We begin with the raw amino-acid sequence, 348 residues long: Anthranilate phosphoribosyltransferase (348 aa).

5-phospho-alpha-D-ribose 1-diphosphate contacts are provided by residues glycine 81, 84–85, 91–94, 109–117, and serine 121; these read GD, NVST, and KHGNRAVSG. Glycine 81 contributes to the anthranilate binding site. Serine 93 serves as a coordination point for Mg(2+). Asparagine 112 is a binding site for anthranilate. Arginine 167 is a binding site for anthranilate. Residues aspartate 226 and glutamate 227 each coordinate Mg(2+).

It belongs to the anthranilate phosphoribosyltransferase family. In terms of assembly, homodimer. Requires Mg(2+) as cofactor.

The enzyme catalyses N-(5-phospho-beta-D-ribosyl)anthranilate + diphosphate = 5-phospho-alpha-D-ribose 1-diphosphate + anthranilate. It functions in the pathway amino-acid biosynthesis; L-tryptophan biosynthesis; L-tryptophan from chorismate: step 2/5. Catalyzes the transfer of the phosphoribosyl group of 5-phosphorylribose-1-pyrophosphate (PRPP) to anthranilate to yield N-(5'-phosphoribosyl)-anthranilate (PRA). The chain is Anthranilate phosphoribosyltransferase from Ectopseudomonas mendocina (strain ymp) (Pseudomonas mendocina).